The chain runs to 87 residues: Small ribosomal subunit protein bS20 (87 aa).

Belongs to the bacterial ribosomal protein bS20 family.

In terms of biological role, binds directly to 16S ribosomal RNA. In Halothermothrix orenii (strain H 168 / OCM 544 / DSM 9562), this protein is Small ribosomal subunit protein bS20.